Reading from the N-terminus, the 875-residue chain is Alanine--tRNA ligase (875 aa).

Residues histidine 564, histidine 568, cysteine 666, and histidine 670 each contribute to the Zn(2+) site.

Belongs to the class-II aminoacyl-tRNA synthetase family. Homotetramer. The cofactor is Zn(2+).

Its subcellular location is the cytoplasm. It catalyses the reaction tRNA(Ala) + L-alanine + ATP = L-alanyl-tRNA(Ala) + AMP + diphosphate. Catalyzes the attachment of alanine to tRNA(Ala) in a two-step reaction: alanine is first activated by ATP to form Ala-AMP and then transferred to the acceptor end of tRNA(Ala). Also edits incorrectly charged Ser-tRNA(Ala) and Gly-tRNA(Ala) via its editing domain. The polypeptide is Alanine--tRNA ligase (Yersinia pseudotuberculosis serotype O:1b (strain IP 31758)).